We begin with the raw amino-acid sequence, 245 residues long: MSQSTSTLRRNGFTFKQFFVAHDRCAMKVGTDGILLGAWAPVAGVTRILDIGTGSGLLALMLAQRTDESVTIDAVELDSEAATQAQENIAHSPWPQRITVHTEDVRQWVPRQTARFDLIISNPPYYEQGVECATPQREQARYTTTLDHEALLTTAAECITEEGFFCVVLPEQTGNTFTQQALSMGWHLRLRTDVAETESRLPHRVLLAFSPRTGECFSDRLVIRGPDQLYSEGYTALTQAFYLFM.

The protein belongs to the methyltransferase superfamily. tRNA (adenine-N(6)-)-methyltransferase family.

Its subcellular location is the cytoplasm. It carries out the reaction adenosine(37) in tRNA1(Val) + S-adenosyl-L-methionine = N(6)-methyladenosine(37) in tRNA1(Val) + S-adenosyl-L-homocysteine + H(+). Functionally, specifically methylates the adenine in position 37 of tRNA(1)(Val) (anticodon cmo5UAC). The sequence is that of tRNA1(Val) (adenine(37)-N6)-methyltransferase from Citrobacter koseri (strain ATCC BAA-895 / CDC 4225-83 / SGSC4696).